A 303-amino-acid polypeptide reads, in one-letter code: Hemolysin E (303 aa).

Cys-87 and Cys-285 form a disulfide bridge. Residues 179–199 form a helical membrane-spanning segment; the sequence is AGAAAGIVAGPFGLIISYSIA.

It belongs to the hemolysin E family. Monomer and oligomer. In periplasm, it is present as a monomer, while in outer membrane vesicles, it oligomerizes to form a pore structure that is active. The pore is formed by a dodecamer. In terms of processing, in periplasm, it forms a disulfide bond, which prevents the oligomerization. In outer membrane vesicles, the redox status prevents formation of the disulfide bond, leading to oligomerization and pore formation.

It is found in the secreted. Its subcellular location is the periplasm. The protein resides in the host cell membrane. Its function is as follows. Toxin, which has some hemolytic activity towards mammalian cells. Acts by forming a pore-like structure upon contact with mammalian cells. The chain is Hemolysin E (hlyE) from Salmonella typhi.